A 313-amino-acid chain; its full sequence is Putative stilbene synthase 2 (313 aa).

Cysteine 88 is an active-site residue. Substrate is bound by residues leucine 191 and 229-231; that span reads GGP.

It belongs to the thiolase-like superfamily. Chalcone/stilbene synthases family. In terms of assembly, homodimer.

The protein localises to the cytoplasm. It catalyses the reaction 4-coumaroyl-CoA + 3 malonyl-CoA + 3 H(+) = trans-resveratrol + 4 CO2 + 4 CoA. The protein operates within phytoalexin biosynthesis; 3,4',5-trihydroxystilbene biosynthesis; 3,4',5-trihydroxystilbene from trans-4-coumarate: step 2/2. This is Putative stilbene synthase 2 from Arachis hypogaea (Peanut).